Reading from the N-terminus, the 325-residue chain is RNA ligase 1 (325 aa).

It depends on Mg(2+) as a cofactor. Mn(2+) is required as a cofactor. Post-translationally, AMPylates itself (auto-AMPylation).

It catalyses the reaction ATP + (ribonucleotide)n-3'-hydroxyl + 5'-phospho-(ribonucleotide)m = (ribonucleotide)n+m + AMP + diphosphate.. Functionally, functions as an RNA ligase, in vitro. The ligation reaction entails three nucleotidyl transfer steps. In the first step, the RNA ligase reacts with ATP in the absence of nucleic acid to form a covalent ligase-AMP intermediate and release pyrophosphate. In step 2, the ligase-AMP binds to the nucleic acid and transfers the adenylate to the 5'-PO4 terminus to form an adenylylated intermediate. In step 3, the RNA ligase directs the attack of the 3'-OH on the 5'-phosphoanhydride linkage, resulting in a repaired 3'-5' phosphodiester and release of AMP. Exhibits selectivity for single-stranded RNA substrates and may not have nick-sealing activity on double-stranded DNA-RNA hybrids. May play a role in maintaining RNA integrity under stress conditions, for example in response to reactive oxygen species (ROS). The sequence is that of RNA ligase 1 from Pongo abelii (Sumatran orangutan).